The following is a 94-amino-acid chain: MRTLAILAAILLVALQAQAEPLQARADEVAAAPEQIAADIPEVVVSLAWDESLAPKHPGSRKNMDCYCRIPACIAGERRYGTCIYQGRLWAFCC.

The signal sequence occupies residues 1 to 19 (MRTLAILAAILLVALQAQA). Residues 20-38 (EPLQARADEVAAAPEQIAA) constitute a propeptide that is removed on maturation. Disulfide bonds link C66–C94, C68–C83, and C73–C93.

It belongs to the alpha-defensin family. In terms of assembly, dimer. As to quaternary structure, (Microbial infection) Interacts with herpes virus 1 HHV-1 envelope glycoprotein B; this interaction inhibits viral infection.

It is found in the secreted. Effector molecule of the innate immune system that acts via antibiotic-like properties against a broad array of infectious agents including bacteria, fungi, and viruses. Possesses the ability to neutralize bacterial toxins such as B.anthracis lethal factor, Clostridium difficile cytotoxin B as well as leukocidin produced by Staphylococcus aureus. Also blocks herpes simplex virus infection by interacting with envelope glycoprotein B and thus preventing its binding to heparan sulfate, the receptor for attachment. This chain is Neutrophil defensin 3 (DEFA3), found in Homo sapiens (Human).